Consider the following 240-residue polypeptide: Flavin-dependent thymidylate synthase (240 aa).

Positions 13–235 (ITVELVKHSA…PETHAAFEKQ (223 aa)) constitute a ThyX domain. FAD contacts are provided by residues Ser64, 87–89 (RHR), and Glu95. Residues 84-87 (EFMR), 95-99 (EESGR), and Arg167 each bind dUMP. The ThyX motif signature appears at 87 to 97 (RHRIASYNEES). FAD contacts are provided by residues 183–185 (NAR) and Asn189. A dUMP-binding site is contributed by Arg194. Residue Arg194 is the Involved in ionization of N3 of dUMP, leading to its activation of the active site.

Belongs to the thymidylate synthase ThyX family. Homotetramer. It depends on FAD as a cofactor.

It carries out the reaction dUMP + (6R)-5,10-methylene-5,6,7,8-tetrahydrofolate + NADPH + H(+) = dTMP + (6S)-5,6,7,8-tetrahydrofolate + NADP(+). Its pathway is pyrimidine metabolism; dTTP biosynthesis. Catalyzes the reductive methylation of 2'-deoxyuridine-5'-monophosphate (dUMP) to 2'-deoxythymidine-5'-monophosphate (dTMP) while utilizing 5,10-methylenetetrahydrofolate (mTHF) as the methyl donor, and NADPH and FADH(2) as the reductant. The polypeptide is Flavin-dependent thymidylate synthase (Tropheryma whipplei (strain TW08/27) (Whipple's bacillus)).